A 156-amino-acid polypeptide reads, in one-letter code: Arginine repressor (156 aa).

It belongs to the ArgR family.

The protein localises to the cytoplasm. It participates in amino-acid biosynthesis; L-arginine biosynthesis [regulation]. Regulates arginine biosynthesis genes. The sequence is that of Arginine repressor from Vibrio vulnificus (strain CMCP6).